The primary structure comprises 474 residues: 3-isopropylmalate dehydratase large subunit (474 aa).

Cys353, Cys414, and Cys417 together coordinate [4Fe-4S] cluster.

It belongs to the aconitase/IPM isomerase family. LeuC type 1 subfamily. In terms of assembly, heterodimer of LeuC and LeuD. It depends on [4Fe-4S] cluster as a cofactor.

It carries out the reaction (2R,3S)-3-isopropylmalate = (2S)-2-isopropylmalate. The protein operates within amino-acid biosynthesis; L-leucine biosynthesis; L-leucine from 3-methyl-2-oxobutanoate: step 2/4. Its function is as follows. Catalyzes the isomerization between 2-isopropylmalate and 3-isopropylmalate, via the formation of 2-isopropylmaleate. This chain is 3-isopropylmalate dehydratase large subunit, found in Pseudomonas paraeruginosa (strain DSM 24068 / PA7) (Pseudomonas aeruginosa (strain PA7)).